We begin with the raw amino-acid sequence, 122 residues long: Large ribosomal subunit protein bL12 (122 aa).

Belongs to the bacterial ribosomal protein bL12 family. As to quaternary structure, homodimer. Part of the ribosomal stalk of the 50S ribosomal subunit. Forms a multimeric L10(L12)X complex, where L10 forms an elongated spine to which 2 to 4 L12 dimers bind in a sequential fashion. Binds GTP-bound translation factors.

Functionally, forms part of the ribosomal stalk which helps the ribosome interact with GTP-bound translation factors. Is thus essential for accurate translation. The chain is Large ribosomal subunit protein bL12 from Azotobacter vinelandii (strain DJ / ATCC BAA-1303).